We begin with the raw amino-acid sequence, 491 residues long: CRM-domain containing factor CFM9, mitochondrial (491 aa).

The transit peptide at 1-25 (MNQVFKGWSRGMSTSRGRSMRSKVE) directs the protein to the mitochondrion. Residues 1-34 (MNQVFKGWSRGMSTSRGRSMRSKVESRMRKESGK) are disordered. The span at 22–34 (SKVESRMRKESGK) shows a compositional bias: basic and acidic residues. The CRM domain occupies 90-187 (ELFTSEQVQA…RNYRQPKNLI (98 aa)). A compositionally biased stretch (basic and acidic residues) spans 255 to 265 (PYVFHGDKQSE). Disordered stretches follow at residues 255–287 (PYVF…DQEE) and 328–491 (RSRT…WDSD). Over residues 277–287 (EPGDEDSDQEE) the composition is skewed to acidic residues. Positions 345–359 (RRNDRDTHSQRRPND) are enriched in basic and acidic residues. The span at 360–375 (SDDDDDDGELDSEDDE) shows a compositional bias: acidic residues. Positions 392–416 (RPREDFKRRSPDPRPRPRAQVRSDD) are enriched in basic and acidic residues. Residues 453–478 (TVSASSSKQSRFRNNSSRDGINNSKS) are compositionally biased toward polar residues.

In terms of tissue distribution, highly expressed in roots and meristemic regions of young seedlings. Expressed at low levels in stems, trichomes and stigma.

It is found in the mitochondrion. Functionally, involved in the splicing of group II introns in mitochondria. Required for the splicing of mitochondrial introns found in nad1, nad2, nad4, nad5, nad7, rps3 and cox2 genes. Splicing of mitochondrial introns is crucial for mitochondrial biogenesis and function, plant growth and development, and plant response to abiotic stresses. The protein is CRM-domain containing factor CFM9, mitochondrial of Arabidopsis thaliana (Mouse-ear cress).